Consider the following 145-residue polypeptide: Hemoglobin subunit beta (145 aa).

The region spanning 1–145 (MLTSEEKAAV…VANALAHRYH (145 aa)) is the Globin domain. Thr-11 is modified (phosphothreonine). Lys-58 is subject to N6-acetyllysine. Residue His-62 participates in heme b binding. Lys-81 carries the post-translational modification N6-acetyllysine. His-91 contacts heme b. S-nitrosocysteine is present on Cys-92.

Belongs to the globin family. As to quaternary structure, heterotetramer of two alpha chains and two beta chains. As to expression, red blood cells.

In terms of biological role, involved in oxygen transport from the lung to the various peripheral tissues. The protein is Hemoglobin subunit beta (HBB) of Rangifer tarandus (Reindeer).